A 146-amino-acid polypeptide reads, in one-letter code: Hemoglobin subunit beta (146 aa).

In terms of domain architecture, Globin spans 2 to 146; sequence QWSAEEKQLI…VAHALARKYH (145 aa). Heme b contacts are provided by His-63 and His-92.

This sequence belongs to the globin family. Heterotetramer of two alpha chains and two beta chains. As to expression, red blood cells.

In terms of biological role, involved in oxygen transport from the lung to the various peripheral tissues. The polypeptide is Hemoglobin subunit beta (HBB) (Struthio camelus (Common ostrich)).